The primary structure comprises 705 residues: Complement C1r subcomponent (705 aa).

Positions 1–17 (MWLLYLLVPALFCRAGG) are cleaved as a signal peptide. The CUB 1 domain maps to 18–141 (SIPIPQKLFG…KGFLAYYQAV (124 aa)). Positions 66, 74, and 119 each coordinate Ca(2+). The cysteines at positions 71 and 89 are disulfide-linked. Residue asparagine 125 is glycosylated (N-linked (GlcNAc...) asparagine). Residues aspartate 142, leucine 143, and glutamate 145 each coordinate Ca(2+). One can recognise an EGF-like; calcium-binding domain in the interval 142–190 (DLDECASRSKSGEEDPQPQCQHLCHNYVGGYFCSCRPGYELQEDTHSCQ). Cystine bridges form between cysteine 146–cysteine 165, cysteine 161–cysteine 174, cysteine 176–cysteine 189, and cysteine 193–cysteine 220. Ca(2+) contacts are provided by asparagine 167, tyrosine 168, and glycine 171. The residue at position 167 (asparagine 167) is a (3R)-3-hydroxyasparagine. The CUB 2 domain occupies 193 to 305 (CSSELYTEAS…RGWKLRYTTE (113 aa)). Serine 206 carries the post-translational modification Phosphoserine; by CK2. Asparagine 221 is a glycosylation site (N-linked (GlcNAc...) asparagine). Ca(2+)-binding residues include aspartate 243, aspartate 253, aspartate 290, and aspartate 294. Residues cysteine 250 and cysteine 268 are joined by a disulfide bond. 2 Sushi domains span residues 307–373 (IKCP…RCKI) and 374–449 (KDCG…RCLP). Cystine bridges form between cysteine 309/cysteine 358, cysteine 338/cysteine 371, cysteine 376/cysteine 429, cysteine 406/cysteine 447, and cysteine 451/cysteine 577. The region spanning 464–702 (IIGGQKAKMG…YVDWIKKEME (239 aa)) is the Peptidase S1 domain. Residue histidine 502 is the Charge relay system of the active site. N-linked (GlcNAc...) asparagine glycosylation occurs at asparagine 514. Aspartate 557 (charge relay system) is an active-site residue. The N-linked (GlcNAc...) asparagine glycan is linked to asparagine 581. Cystine bridges form between cysteine 620-cysteine 639 and cysteine 650-cysteine 680. Serine 654 (charge relay system) is an active-site residue.

The protein belongs to the peptidase S1 family. As to quaternary structure, core component of the complement C1 complex, a calcium-dependent complex composed of 1 molecule of the C1Q subcomplex, 2 molecules of C1R and 2 molecules of C1S. The C1Q subcomplex is composed 18 subunits: 3 chains of C1QA, C1QB, and C1QC trimerize to form 6 collagen-like triple helices connected to six globular ligand-recognition modules. Within the C1 complex, C1R is a dimer of identical chains, each of which is activated by cleavage into two chains, heavy and light, connected by disulfide bonds. Post-translationally, cleaved and activated by autocatalytic processing to generate Complement C1r subcomponent heavy and light chains that are connected by disulfide bonds. In terms of processing, the iron and 2-oxoglutarate dependent 3-hydroxylation of aspartate and asparagine is (R) stereospecific within EGF domains.

It localises to the secreted. It is found in the cell surface. The catalysed reaction is Selective cleavage of Lys(or Arg)-|-Ile bond in complement subcomponent C1s to form the active form of C1s (EC 3.4.21.42).. Activated by the C1Q subcomplex of the C1 complex following C1Q binding to immunoglobulins (IgG or IgM) complexed with antigens to form antigen-antibody complexes on the surface of pathogens. Immunoglobulin-binding promotes autoactivation of C1R, which results in the cleavage of the Arg-Ile bond in the catalytic domain. Its function is as follows. Serine protease component of the complement C1 complex, a multiprotein complex that initiates the classical pathway of the complement system, a cascade of proteins that leads to phagocytosis and breakdown of pathogens and signaling that strengthens the adaptive immune system. C1R catalyzes the first enzymatic step in the classical complement pathway: it is activated by the C1Q subcomplex of the C1 complex, which associates with IgG or IgM immunoglobulins complexed with antigens to form antigen-antibody complexes on the surface of pathogens. Immunoglobulin-binding promotes the autocatalytic cleavage and activation of C1R. Activated C1R then cleaves and activates C1S, the second protease of the classical complement pathway. It is unclear if C1R activates C1S within single, strained C1 complexes or between neighboring C1 complexes on surfaces. The sequence is that of Complement C1r subcomponent from Homo sapiens (Human).